Consider the following 402-residue polypeptide: Elongation factor Tu (402 aa).

Positions Lys16–Val211 constitute a tr-type G domain. Residues Gly25–Thr32 are G1. Gly25 to Thr32 contacts GTP. Thr32 contributes to the Mg(2+) binding site. A G2 region spans residues Gly66 to Asn70. A G3 region spans residues Asp87–Gly90. GTP is bound by residues Asp87–His91 and Asn142–Asp145. The interval Asn142–Asp145 is G4. A G5 region spans residues Ser181 to Arg183.

This sequence belongs to the TRAFAC class translation factor GTPase superfamily. Classic translation factor GTPase family. EF-Tu/EF-1A subfamily. As to quaternary structure, monomer.

The protein resides in the cytoplasm. It carries out the reaction GTP + H2O = GDP + phosphate + H(+). GTP hydrolase that promotes the GTP-dependent binding of aminoacyl-tRNA to the A-site of ribosomes during protein biosynthesis. The chain is Elongation factor Tu from Mesomycoplasma hyopneumoniae (strain J / ATCC 25934 / NCTC 10110) (Mycoplasma hyopneumoniae).